Here is a 408-residue protein sequence, read N- to C-terminus: Eukaryotic initiation factor 4A-II (408 aa).

Residues 1–22 (MSGGSADYNSREHGGPEGMDPD) form a disordered region. Positions 34 to 62 (DNFDDMNLKESLLRGIYAYGFEKPSAIQQ) match the Q motif motif. Residues 65–236 (IIPCIKGYDV…KKFMRDPIRI (172 aa)) form the Helicase ATP-binding domain. 77 to 84 (QAQSGTGK) is an ATP binding site. Thr160 carries the post-translational modification Phosphothreonine. The DEAD box motif lies at 183 to 186 (LDEA). The region spanning 247-408 (GIKQFYINVE…EMPMNVADLI (162 aa)) is the Helicase C-terminal domain.

The protein belongs to the DEAD box helicase family. eIF4A subfamily. EIF4F is a multi-subunit complex, the composition of which varies with external and internal environmental conditions. It is composed of at least EIF4A, EIF4E and EIF4G1/EIFFG3. Interacts with EIF4E. May interact with NOM1.

It catalyses the reaction ATP + H2O = ADP + phosphate + H(+). ATP-dependent RNA helicase which is a subunit of the eIF4F complex involved in cap recognition and is required for mRNA binding to ribosome. In the current model of translation initiation, eIF4A unwinds RNA secondary structures in the 5'-UTR of mRNAs which is necessary to allow efficient binding of the small ribosomal subunit, and subsequent scanning for the initiator codon. The polypeptide is Eukaryotic initiation factor 4A-II (EIF4A2) (Macaca fascicularis (Crab-eating macaque)).